The primary structure comprises 542 residues: CTP synthase (542 aa).

The interval 1 to 265 is amidoligase domain; it reads MTRFIFITGG…DVQVCRHFHL (265 aa). Residue Ser-13 participates in CTP binding. Residue Ser-13 participates in UTP binding. ATP contacts are provided by residues 14–19 and Asp-71; that span reads SLGKGL. Residues Asp-71 and Glu-139 each contribute to the Mg(2+) site. Residues 146–148, 186–191, and Lys-222 contribute to the CTP site; these read DIE and KTKPTQ. UTP contacts are provided by residues 186-191 and Lys-222; that span reads KTKPTQ. The Glutamine amidotransferase type-1 domain maps to 291–541; sequence TIAVVGKYTS…VQAAITQSRL (251 aa). Residue Gly-353 participates in L-glutamine binding. The active-site Nucleophile; for glutamine hydrolysis is the Cys-380. Residues 381–384, Glu-404, and Arg-469 contribute to the L-glutamine site; that span reads FGMQ. Active-site residues include His-514 and Glu-516.

This sequence belongs to the CTP synthase family. In terms of assembly, homotetramer.

It catalyses the reaction UTP + L-glutamine + ATP + H2O = CTP + L-glutamate + ADP + phosphate + 2 H(+). The enzyme catalyses L-glutamine + H2O = L-glutamate + NH4(+). It carries out the reaction UTP + NH4(+) + ATP = CTP + ADP + phosphate + 2 H(+). The protein operates within pyrimidine metabolism; CTP biosynthesis via de novo pathway; CTP from UDP: step 2/2. Its activity is regulated as follows. Allosterically activated by GTP, when glutamine is the substrate; GTP has no effect on the reaction when ammonia is the substrate. The allosteric effector GTP functions by stabilizing the protein conformation that binds the tetrahedral intermediate(s) formed during glutamine hydrolysis. Inhibited by the product CTP, via allosteric rather than competitive inhibition. Functionally, catalyzes the ATP-dependent amination of UTP to CTP with either L-glutamine or ammonia as the source of nitrogen. Regulates intracellular CTP levels through interactions with the four ribonucleotide triphosphates. The polypeptide is CTP synthase (Rhodospirillum rubrum (strain ATCC 11170 / ATH 1.1.1 / DSM 467 / LMG 4362 / NCIMB 8255 / S1)).